A 158-amino-acid polypeptide reads, in one-letter code: Superoxide dismutase [Cu-Zn] (158 aa).

H46, H48, and H63 together coordinate Cu cation. Cysteines 57 and 149 form a disulfide. Zn(2+) contacts are provided by H63, H71, H80, and D83. A Cu cation-binding site is contributed by H120.

It belongs to the Cu-Zn superoxide dismutase family. Homodimer. Cu cation is required as a cofactor. The cofactor is Zn(2+).

Its subcellular location is the cytoplasm. The catalysed reaction is 2 superoxide + 2 H(+) = H2O2 + O2. Its function is as follows. Destroys radicals which are normally produced within the cells and which are toxic to biological systems. In Onchocerca volvulus, this protein is Superoxide dismutase [Cu-Zn] (sod-1).